The sequence spans 238 residues: Urease accessory protein UreF (238 aa).

This sequence belongs to the UreF family. As to quaternary structure, ureD, UreF and UreG form a complex that acts as a GTP-hydrolysis-dependent molecular chaperone, activating the urease apoprotein by helping to assemble the nickel containing metallocenter of UreC. The UreE protein probably delivers the nickel.

It localises to the cytoplasm. Functionally, required for maturation of urease via the functional incorporation of the urease nickel metallocenter. In Rhodopseudomonas palustris (strain BisA53), this protein is Urease accessory protein UreF.